Consider the following 87-residue polypeptide: Cell division topological specificity factor (87 aa).

This sequence belongs to the MinE family.

Its function is as follows. Prevents the cell division inhibition by proteins MinC and MinD at internal division sites while permitting inhibition at polar sites. This ensures cell division at the proper site by restricting the formation of a division septum at the midpoint of the long axis of the cell. In Aliivibrio fischeri (strain ATCC 700601 / ES114) (Vibrio fischeri), this protein is Cell division topological specificity factor.